Reading from the N-terminus, the 702-residue chain is MSMRGSGKLWLVMADGQEDPAVFTSTCLPSDSRLLATVTNAYLGTRVYRNILHVSGVYNGAAGDTHRADIPSPVNVRMTVPDGDVPVETFTLNTRTGTFSHKLESSSYTATHQIYAHHSLVHLMAFSITIWRSAGTSQPITVQLQAPFVPKSQDLDLQQGPDFQGAHYIYGQTLVPEVEGGPQPTVHMLWTPVPQAVTLHEEEQERRWEFLTAVAESEEEAKRSYSEGLARMAAGSLHSSHTRAWAALWRGCCVDLEGPLPLRQALYGCLYYLLSAIPPQGTPGFHFHGISPGGLSNGTRGEDYWGHVFWDQDTWIFPNILLFYPEAARAILEYRIRTLEGALLNAQEQGYKGAKFPWESAATGREVCPEDIYGAQEIHITGDVLMAFEQYYHTTQDQKLFRTDGGWELVSAVAQYWCSRMVWSEEEQCYHIRGVMPPDEYHYQVDNSAYTNAVAQRSLNFAASVARDFFIPVPEEWVECAKKVKVPFDAVRKYHPEYDGYSPGEPVKQADVVLLGFPLMHPMHPEVRRNDLVMYEPVTELSGPAMTWSMFAVGWLELKETQRAQGLLNKCFSNITEPFKIWVENSDGSGAVNFLTGMGGFLQAVLFGYTGFRITKTNLRFDPAFPSDVSKLEVTGVSYLGSKLKFSITKEKMRIAVTKCPLHPPLEAVLEESGQRFPLHEGQSISFPTAAGCIQKAPSEGL.

310–311 (WD) is a substrate binding site. Glu-440 functions as the Proton donor in the catalytic mechanism. Residue 508 to 509 (KQ) participates in substrate binding.

The protein belongs to the glycosyl hydrolase 65 family.

It carries out the reaction (5R)-5-O-[alpha-D-glucosyl-(1-&gt;2)-beta-D-galactosyl]-5-hydroxy-L-lysyl-[collagen] + H2O = (5R)-5-O-(beta-D-galactosyl)-5-hydroxy-L-lysyl-[collagen] + D-glucose. In terms of biological role, catalyzes the hydrolysis of glucose from the disaccharide unit linked to hydroxylysine residues of collagen and collagen-like proteins. The polypeptide is Protein-glucosylgalactosylhydroxylysine glucosidase (Gallus gallus (Chicken)).